A 93-amino-acid chain; its full sequence is Co-chaperonin GroES (93 aa).

Belongs to the GroES chaperonin family. Heptamer of 7 subunits arranged in a ring. Interacts with the chaperonin GroEL.

Its subcellular location is the cytoplasm. Its function is as follows. Together with the chaperonin GroEL, plays an essential role in assisting protein folding. The GroEL-GroES system forms a nano-cage that allows encapsulation of the non-native substrate proteins and provides a physical environment optimized to promote and accelerate protein folding. GroES binds to the apical surface of the GroEL ring, thereby capping the opening of the GroEL channel. This chain is Co-chaperonin GroES, found in Streptococcus gordonii (strain Challis / ATCC 35105 / BCRC 15272 / CH1 / DL1 / V288).